The following is a 173-amino-acid chain: Photosystem I assembly protein Ycf3 (173 aa).

TPR repeat units follow at residues 35 to 68 (AYIYYRDGLAAQNNGDYSEALEYYKESLLLEENK), 72 to 105 (GETLKNMAIIYMSNGEEDLSIETYEKALVENPKQ), and 120 to 153 (GRNAEQNGDLDQRDIWFDKAAEVWSKAVRLYPGG).

It belongs to the Ycf3 family.

The protein localises to the cellular thylakoid membrane. Its function is as follows. Essential for the assembly of the photosystem I (PSI) complex. May act as a chaperone-like factor to guide the assembly of the PSI subunits. The polypeptide is Photosystem I assembly protein Ycf3 (Prochlorococcus marinus (strain MIT 9301)).